The sequence spans 259 residues: Type III pantothenate kinase (259 aa).

9 to 16 (DAGNSRIK) serves as a coordination point for ATP. Residues Tyr-93 and 100-103 (GSDR) contribute to the substrate site. Catalysis depends on Asp-102, which acts as the Proton acceptor. Position 126 (Thr-126) interacts with ATP. A substrate-binding site is contributed by Thr-190.

It belongs to the type III pantothenate kinase family. Homodimer. The cofactor is NH4(+). K(+) is required as a cofactor.

It localises to the cytoplasm. It catalyses the reaction (R)-pantothenate + ATP = (R)-4'-phosphopantothenate + ADP + H(+). The protein operates within cofactor biosynthesis; coenzyme A biosynthesis; CoA from (R)-pantothenate: step 1/5. Functionally, catalyzes the phosphorylation of pantothenate (Pan), the first step in CoA biosynthesis. The polypeptide is Type III pantothenate kinase (Burkholderia thailandensis (strain ATCC 700388 / DSM 13276 / CCUG 48851 / CIP 106301 / E264)).